The primary structure comprises 339 residues: Fructose-1,6-bisphosphatase isozyme 2 (339 aa).

The interval 3 to 10 (DRSPFETD) is important for interaction with ALDOA. AMP contacts are provided by residues Val18 and 28 to 32 (TGELT). Mg(2+) contacts are provided by Asp69 and Glu98. An AMP-binding site is contributed by 113–114 (KY). Mg(2+)-binding residues include Asp119, Leu121, and Asp122. Asp122 serves as a coordination point for substrate. Arg141 serves as a coordination point for AMP. A Nuclear localization signal motif is present at residues 204 to 208 (KKKGK). 213–216 (NEGY) lines the substrate pocket. Phosphotyrosine is present on residues Tyr216 and Tyr219. Substrate is bound by residues 245–249 (YVGSM), Tyr265, and Lys275. Glu281 is a binding site for Mg(2+).

It belongs to the FBPase class 1 family. In terms of assembly, homotetramer. Interacts with ALDOA; the interaction blocks inhibition by physiological concentrations of AMP and reduces inhibition by Ca(2+). Interacts with alpha-actinin and F-actin. It depends on Mg(2+) as a cofactor.

It localises to the cell junction. The protein resides in the cytoplasm. The protein localises to the nucleus. Its subcellular location is the myofibril. It is found in the sarcomere. It localises to the z line. It catalyses the reaction beta-D-fructose 1,6-bisphosphate + H2O = beta-D-fructose 6-phosphate + phosphate. The protein operates within carbohydrate biosynthesis; gluconeogenesis. Its activity is regulated as follows. Subject to complex allosteric regulation. The enzyme can assume an active R-state, or an inactive T-state. Intermediate conformations may exist. AMP acts as an allosteric inhibitor. Fructose 2,6-bisphosphate acts as a competitive inhibitor. Strongly inhibited by Ca(2+). In terms of biological role, catalyzes the hydrolysis of fructose 1,6-bisphosphate to fructose 6-phosphate in the presence of divalent cations and probably participates in glycogen synthesis from carbohydrate precursors, such as lactate. This chain is Fructose-1,6-bisphosphatase isozyme 2 (FBP2), found in Bos taurus (Bovine).